Here is a 241-residue protein sequence, read N- to C-terminus: Probable transcriptional regulatory protein H16_A0916 (241 aa).

Belongs to the TACO1 family.

Its subcellular location is the cytoplasm. The polypeptide is Probable transcriptional regulatory protein H16_A0916 (Cupriavidus necator (strain ATCC 17699 / DSM 428 / KCTC 22496 / NCIMB 10442 / H16 / Stanier 337) (Ralstonia eutropha)).